Reading from the N-terminus, the 320-residue chain is MNFVKNKLVVVGAGMVGSAVLNSVLSLNLLSEVVIIDINDNKAKGEALDASHTTSFAYSPNVKVRAGNYEDCADAQIIVITAGPSLKPDDKLDRLVLADTNVKVTDSIMKNICKYTKDAIIIVVTNPVDIATYYCQNNFDYPKNKIIGTGTLLDTARMRKIIGKKYNVDSKNVHGYVLGEHGGSSFTSWSDVNIAGIPFNQLNDIFKDHYKVDKDEVDKEVRDSGIEVLKLKGYTSAGIAMSVSRLVKAMLLNEQSILPVSSTLEGEYGINDVALSIPCIITSNGIEKKLEIPLSKDEVEKLNKSADNLKSIIKGLNTNK.

NAD(+) contacts are provided by V16, D37, K42, and Y69. R94 is a binding site for substrate. NAD(+) is bound by residues S107, V124–N126, and T149. Residue N126–D129 participates in substrate binding. D154–R157 lines the substrate pocket. Beta-D-fructose 1,6-bisphosphate contacts are provided by R159 and H174. H181 acts as the Proton acceptor in catalysis. Residue T235 coordinates substrate.

Belongs to the LDH/MDH superfamily. LDH family. In terms of assembly, homotetramer.

It localises to the cytoplasm. The enzyme catalyses (S)-lactate + NAD(+) = pyruvate + NADH + H(+). It participates in fermentation; pyruvate fermentation to lactate; (S)-lactate from pyruvate: step 1/1. Its activity is regulated as follows. Allosterically activated by fructose 1,6-bisphosphate (FBP). Catalyzes the conversion of lactate to pyruvate. This Clostridium acetobutylicum (strain ATCC 824 / DSM 792 / JCM 1419 / IAM 19013 / LMG 5710 / NBRC 13948 / NRRL B-527 / VKM B-1787 / 2291 / W) protein is L-lactate dehydrogenase 2.